Reading from the N-terminus, the 168-residue chain is Peptide deformylase 2 (168 aa).

2 residues coordinate Fe cation: Cys-91 and His-133. The active site involves Glu-134. Fe cation is bound at residue His-137.

It belongs to the polypeptide deformylase family. Fe(2+) serves as cofactor.

The enzyme catalyses N-terminal N-formyl-L-methionyl-[peptide] + H2O = N-terminal L-methionyl-[peptide] + formate. Its function is as follows. Removes the formyl group from the N-terminal Met of newly synthesized proteins. Requires at least a dipeptide for an efficient rate of reaction. N-terminal L-methionine is a prerequisite for activity but the enzyme has broad specificity at other positions. This chain is Peptide deformylase 2, found in Vibrio vulnificus (strain CMCP6).